The following is a 249-amino-acid chain: 3-deoxy-manno-octulosonate cytidylyltransferase (249 aa).

It belongs to the KdsB family.

It localises to the cytoplasm. The catalysed reaction is 3-deoxy-alpha-D-manno-oct-2-ulosonate + CTP = CMP-3-deoxy-beta-D-manno-octulosonate + diphosphate. It functions in the pathway nucleotide-sugar biosynthesis; CMP-3-deoxy-D-manno-octulosonate biosynthesis; CMP-3-deoxy-D-manno-octulosonate from 3-deoxy-D-manno-octulosonate and CTP: step 1/1. The protein operates within bacterial outer membrane biogenesis; lipopolysaccharide biosynthesis. Activates KDO (a required 8-carbon sugar) for incorporation into bacterial lipopolysaccharide in Gram-negative bacteria. In Photorhabdus laumondii subsp. laumondii (strain DSM 15139 / CIP 105565 / TT01) (Photorhabdus luminescens subsp. laumondii), this protein is 3-deoxy-manno-octulosonate cytidylyltransferase.